The following is a 384-amino-acid chain: DNA dC-&gt;dU-editing enzyme APOBEC-3G (384 aa).

Positions 1 to 60 (MNPQFRNMVDGMDPHKFSYNFKNRPILSRRNTVWLCYEVKTKGPSRPPLDAKIFRGQVYF) are essential for cytoplasmic localization. CMP/dCMP-type deaminase domains follow at residues 29–138 (RRNT…LRSL) and 214–328 (GRHE…LRTL). Position 32 is a phosphothreonine; by PKA (Thr32). His65, Cys97, and Cys100 together coordinate Zn(2+). Residues 209 to 336 (EPCVEGRHET…TLDEAEAKIS (128 aa)) form a necessary for homooligomerization region. The interval 213 to 215 (EGR) is interaction with DNA. Phosphothreonine; by PKA and CAMK2 is present on Thr218. A Zn(2+)-binding site is contributed by His257. Glu259 (proton donor) is an active-site residue. Zn(2+) contacts are provided by Cys288 and Cys291. Positions 313 to 320 (RIYDDQGR) are interaction with DNA.

This sequence belongs to the cytidine and deoxycytidylate deaminase family. Homodimer. Zn(2+) is required as a cofactor.

The protein localises to the cytoplasm. It is found in the nucleus. Its subcellular location is the P-body. The enzyme catalyses a 2'-deoxycytidine in single-stranded DNA + H2O + H(+) = a 2'-deoxyuridine in single-stranded DNA + NH4(+). Functionally, DNA deaminase (cytidine deaminase) which acts as an inhibitor of retrovirus replication and retrotransposon mobility. After the penetration of retroviral nucleocapsids into target cells of infection and the initiation of reverse transcription, it can induce the conversion of cytosine to uracil in the minus-sense single-strand viral DNA, leading to G-to-A hypermutations in the subsequent plus-strand viral DNA. The resultant detrimental levels of mutations in the proviral genome, along with a deamination-independent mechanism that works prior to the proviral integration, together exert efficient antiretroviral effects in infected target cells. Selectively targets single-stranded DNA and does not deaminate double-stranded DNA or single- or double-stranded RNA. The sequence is that of DNA dC-&gt;dU-editing enzyme APOBEC-3G (APOBEC3G) from Pongo pygmaeus (Bornean orangutan).